The following is a 480-amino-acid chain: Lysostaphin (480 aa).

The N-terminal stretch at 1–23 is a signal peptide; sequence MKKTKNNYYTTPLAIGLSTFALA. Residues 24–234 constitute a propeptide that is removed on maturation; sequence SIVYGGIQNE…ALVQNRTALR (211 aa). 13 tandem repeats follow at residues 49–61, 62–74, 75–87, 88–100, 101–113, 114–126, 127–139, 140–152, 153–165, 166–178, 179–191, 192–204, and 205–217. The segment at 49 to 230 is 14 X 13 AA tandem repeats of A-E-V-E-T-S-K-[AP]-P-V-E-N-T; that stretch reads AEVETSKPPV…ETSKALVQNR (182 aa). The segment at 51 to 219 is disordered; that stretch reads VETSKPPVEN…SKAPVENTAE (169 aa). The stretch at 218–230 is one 14; approximate repeat; it reads AEVETSKALVQNR. Residues H266 and D270 each contribute to the Zn(2+) site. Residue H347 is part of the active site. H349 provides a ligand contact to Zn(2+). In terms of domain architecture, SH3b spans 400–468; sequence SESASFTPNT…YLPVRTWNKS (69 aa).

Belongs to the peptidase M23B family. Monomer. Zn(2+) serves as cofactor.

The protein localises to the secreted. It carries out the reaction Hydrolysis of the -Gly-|-Gly- bond in the pentaglycine inter-peptide link joining staphylococcal cell wall peptidoglycans.. In terms of biological role, lyses staphylococcal cells by hydrolyzing the polyglycine interpeptide bridges of the peptidoglycan. This Staphylococcus staphylolyticus protein is Lysostaphin (lss).